A 701-amino-acid chain; its full sequence is Elongation factor G (701 aa).

A tr-type G domain is found at 8 to 290; sequence SRYRNIGISA…AVIEYLPAPT (283 aa). GTP contacts are provided by residues 17–24, 88–92, and 142–145; these read AHIDAGKT, DTPGH, and NKMD.

Belongs to the TRAFAC class translation factor GTPase superfamily. Classic translation factor GTPase family. EF-G/EF-2 subfamily.

Its subcellular location is the cytoplasm. Functionally, catalyzes the GTP-dependent ribosomal translocation step during translation elongation. During this step, the ribosome changes from the pre-translocational (PRE) to the post-translocational (POST) state as the newly formed A-site-bound peptidyl-tRNA and P-site-bound deacylated tRNA move to the P and E sites, respectively. Catalyzes the coordinated movement of the two tRNA molecules, the mRNA and conformational changes in the ribosome. The sequence is that of Elongation factor G from Actinobacillus pleuropneumoniae serotype 5b (strain L20).